We begin with the raw amino-acid sequence, 339 residues long: HTH-type transcriptional regulator KdgR (339 aa).

The 56-residue stretch at 9 to 64 folds into the HTH lacI-type domain; the sequence is TTIKDVAECAGVSKSTVSRYINGKIDAISPEKVKNIKKAIAELNYRPSKMAQGLKI. The segment at residues 11–30 is a DNA-binding region (H-T-H motif); it reads IKDVAECAGVSKSTVSRYIN.

Transcriptional repressor of the kdgRKAT and kduID operons for pectin utilization. The chain is HTH-type transcriptional regulator KdgR (kdgR) from Bacillus subtilis (strain 168).